The following is a 446-amino-acid chain: Gasdermin-A (446 aa).

Residues 1–252 (MTMFENVTRA…FILIQASDVG (252 aa)) form a triggers pyroptosis region. 9 to 13 (RALAR) provides a ligand contact to a cardiolipin. A run of 4 beta stranded transmembrane segments spans residues 78–95 (NFSFKNMLDARVEGDVDV), 99–120 (VKVKGTAGLSRSSTLEVQTLSV), 164–180 (VTLERAGKAEGCFSLPF), and 184–198 (LGLQGSVNHKEAVTI).

This sequence belongs to the gasdermin family. As to quaternary structure, homooligomer; homooligomeric ring-shaped pore complex containing 18-36 subunits when inserted in the membrane. Post-translationally, cleavage by bacterial SpeB relieves autoinhibition by releasing the N-terminal moiety (Gasdermin-A, N-terminal) that initiates pyroptosis. In terms of processing, palmitoylated. As to expression, expressed predominantly in the gastrointestinal (GI) tract and in the skin at a lower level. In the GI tract, the expression is highly restricted to the esophagus and forestomach.

The protein resides in the cytoplasm. It is found in the perinuclear region. Its subcellular location is the cytosol. The protein localises to the cell membrane. With respect to regulation, the full-length protein before cleavage is inactive: intramolecular interactions between N- and C-terminal domains mediate autoinhibition in the absence of activation signal. The intrinsic pyroptosis-inducing activity is carried by the released N-terminal moiety (Gasdermin-A, N-terminal) following cleavage by bacterial effector protein SpeB. This form constitutes the precursor of the pore-forming protein and acts as a sensor of bacterial infection: upon infection, specifically cleaved by bacterial effector protein SpeB in epithelial cells, releasing the N-terminal moiety (Gasdermin-A, N-terminal) that binds to membranes and forms pores, triggering pyroptosis. Functionally, pore-forming protein that causes membrane permeabilization and pyroptosis. Released upon cleavage by bacterial effector protein SpeB, and binds to membrane inner leaflet lipids. Homooligomerizes within the membrane and forms pores of 10-15 nanometers (nm) of inner diameter, triggering pyroptosis. Pyroptosis triggers the elimination of the infected skin cell, depriving the pathogen of its protective niche, while inducing an inflammatory response. This ultimately prevents bacterial penetration of the epithelial barrier and a subsequent systemic dissemination of the pathogen. Binds to cardiolipin and other acidic phospholipids, such as phosphatidylserine, which mediate its targeting to the inner leaflet membrane. The sequence is that of Gasdermin-A (Gsdma) from Mus musculus (Mouse).